The chain runs to 696 residues: MADESLHTVPLEHNIDYHIVTLFERLEAMRKDSHGGGHGVNNRLSSTLQAPKRSMQAEIRTLEFWRSIISECLASFMYVFIVCGAAAGVGVGASVSSVLLATALASGLAMATLTQCFLHISGAHINPAVTLALCVVRSISPIRAAMYITAQCGGGIAGAALLYGVTVPGYQGNLQAAISHSAALAAWERFGVEFILTFLVVLCYFVSTDPMKKFMGNSAASIGCAYSACCFVSMPYLNPARSLGPSFVLNKWDSHWVYWFGPLVGGMASGLVYEYIFNSRNRNLRHNKGSIDNDSSSIHSEDELNYDMDMEKPNKYQQSQGTYPRGQSNGNGGGQAAGNGQHQAANMGQMPGVVANAGQGNYCQNLYTAPPLSSKYDQQQEPLYGGTRSLYCRSPTLTRSNLNRSQSVYAKSNTAINRDIVPRPGPLVPAQSLYPMRTQQQQQQQQQQQQQVAPAPQSSHLQNQNVQNQMQQRSESIYGMRGSMRGQQQPIQQQQQQQQQQQLQQQQPNMGVQQQQMQPPPQMMSDPQQQPQGFQPVYGTRTNPTPMDGNHKYDRRDPQQMYGVTGPRNRGQSAQSDDSSYGSYHGSAVTPPARHPSVEPSPPPPPMLMYAPPPQPNAAHPQPIRTQSERKVSAPVVVSQPAACAVTYTTSQGSAVTAQQQQQQQQQQQQQQQQQQQQMMMQQQQQHYGMLPLRPN.

The Cytoplasmic segment spans residues 1–71; it reads MADESLHTVP…LEFWRSIISE (71 aa). Phosphoserine is present on Ser-46. The residue at position 47 (Thr-47) is a Phosphothreonine. A helical membrane pass occupies residues 72–93; it reads CLASFMYVFIVCGAAAGVGVGA. Topologically, residues 94–97 are extracellular; the sequence is SVSS. A helical membrane pass occupies residues 98 to 118; it reads VLLATALASGLAMATLTQCFL. Residues 119–143 are Cytoplasmic-facing; the sequence is HISGAHINPAVTLALCVVRSISPIR. The NPA 1 motif lies at 126-128; it reads NPA. The helical transmembrane segment at 144-167 threads the bilayer; that stretch reads AAMYITAQCGGGIAGAALLYGVTV. The Extracellular portion of the chain corresponds to 168-189; it reads PGYQGNLQAAISHSAALAAWER. A helical transmembrane segment spans residues 190-208; it reads FGVEFILTFLVVLCYFVST. Residues 209 to 213 are Cytoplasmic-facing; it reads DPMKK. Residues 214-234 form a helical membrane-spanning segment; it reads FMGNSAASIGCAYSACCFVSM. Residues 235–256 lie on the Extracellular side of the membrane; that stretch reads PYLNPARSLGPSFVLNKWDSHW. Positions 238–240 match the NPA 2 motif; it reads NPA. Residues 257–273 form a helical membrane-spanning segment; that stretch reads VYWFGPLVGGMASGLVY. Tyr-273 carries the post-translational modification Phosphotyrosine; by Src. Residues 274–696 are Cytoplasmic-facing; that stretch reads EYIFNSRNRN…HYGMLPLRPN (423 aa). The residue at position 300 (Ser-300) is a Phosphoserine. The segment at 314-345 is disordered; it reads NKYQQSQGTYPRGQSNGNGGGQAAGNGQHQAA. At Tyr-367 the chain carries Phosphotyrosine; by Abl. Tyr-384 carries the post-translational modification Phosphotyrosine; by Src. Ser-394 is modified (phosphoserine). Disordered stretches follow at residues 436 to 634 and 650 to 696; these read MRTQ…KVSA and TSQG…LRPN. 2 stretches are compositionally biased toward low complexity: residues 439–451 and 462–472; these read QQQQ…QQQQ and QNQNVQNQMQQ. The residue at position 478 (Tyr-478) is a Phosphotyrosine; by Src. The span at 487 to 532 shows a compositional bias: low complexity; the sequence is QQQPIQQQQQQQQQQQLQQQQPNMGVQQQQMQPPPQMMSDPQQQPQ. Residues 549–558 show a composition bias toward basic and acidic residues; sequence GNHKYDRRDP. Ser-576 bears the Phosphoserine mark. The span at 576–587 shows a compositional bias: low complexity; it reads SDDSSYGSYHGS. Over residues 599–616 the composition is skewed to pro residues; that stretch reads EPSPPPPPMLMYAPPPQP. Tyr-610 bears the Phosphotyrosine; by Abl mark. Residues 659 to 686 are compositionally biased toward low complexity; the sequence is QQQQQQQQQQQQQQQQQQQQMMMQQQQQ.

The protein belongs to the MIP/aquaporin (TC 1.A.8) family. Phosphorylated at its C-terminus. In terms of tissue distribution, detected in all tissues with neurogenic abilities, for example the neurogenic ectoderm.

The protein resides in the membrane. In terms of biological role, essential for proper differentiation of ectoderm. Acts synergistically with neurogenic locus proteins Notch and Delta during the separation of neural and epidermal cell lineages in response to the lateral inhibition signal. Voltage-insensitive monovalent cation channel. Ion transport is blocked by the presence of divalent cations. The chain is Neurogenic protein big brain (bib) from Drosophila melanogaster (Fruit fly).